Here is a 202-residue protein sequence, read N- to C-terminus: uncharacterized protein (202 aa).

Positions 179–202 are disordered; sequence FDEQDSTPELPPNYLLDSQKKSQG.

This is an uncharacterized protein from Haemophilus influenzae (strain ATCC 51907 / DSM 11121 / KW20 / Rd).